A 175-amino-acid chain; its full sequence is B9 domain-containing protein 2 (175 aa).

The 117-residue stretch at 2–118 folds into the C2 B9-type domain; that stretch reads AEVHVIGQII…ACPTWRPLGS (117 aa).

This sequence belongs to the B9D family. Part of the tectonic-like complex (also named B9 complex). Interacts with TUBG1.

It is found in the cytoplasm. The protein localises to the cytoskeleton. Its subcellular location is the cilium basal body. It localises to the cilium axoneme. The protein resides in the nucleus. Functionally, component of the tectonic-like complex, a complex localized at the transition zone of primary cilia and acting as a barrier that prevents diffusion of transmembrane proteins between the cilia and plasma membranes. The chain is B9 domain-containing protein 2 (B9D2) from Homo sapiens (Human).